Reading from the N-terminus, the 446-residue chain is Cyclin-F2-2 (446 aa).

A disordered region spans residues 191–216 (YNGDNDAPAPDNSTASRPQLCAPYDD).

The protein belongs to the cyclin family. Cyclin F subfamily.

The chain is Cyclin-F2-2 (CYCF2-2) from Oryza sativa subsp. japonica (Rice).